The chain runs to 456 residues: UDP-glycosyltransferase 74D1 (456 aa).

UDP-alpha-D-glucose-binding positions include S279, 332–334 (SPQ), 349–357 (HCGWNSTLE), and 371–374 (YSDQ).

The protein belongs to the UDP-glycosyltransferase family. Expressed in leaves.

Functionally, glucosyltransferase that glucosylates jasmonate (JA) and JA derivatives. Also active on indole-3-acetic acid (IAA), 4-coumrate, cinnamate and caffeate. This chain is UDP-glycosyltransferase 74D1 (UGT74D1), found in Arabidopsis thaliana (Mouse-ear cress).